A 138-amino-acid polypeptide reads, in one-letter code: Cysteine desulfuration protein SufE (138 aa).

Cysteine 51 functions as the Cysteine persulfide intermediate in the catalytic mechanism.

This sequence belongs to the SufE family. In terms of assembly, homodimer. Interacts with SufS.

It is found in the cytoplasm. The protein operates within cofactor biosynthesis; iron-sulfur cluster biosynthesis. Functionally, participates in cysteine desulfuration mediated by SufS. Cysteine desulfuration mobilizes sulfur from L-cysteine to yield L-alanine and constitutes an essential step in sulfur metabolism for biosynthesis of a variety of sulfur-containing biomolecules. Functions as a sulfur acceptor for SufS, by mediating the direct transfer of the sulfur atom from the S-sulfanylcysteine of SufS, an intermediate product of cysteine desulfuration process. The chain is Cysteine desulfuration protein SufE from Escherichia coli O17:K52:H18 (strain UMN026 / ExPEC).